A 388-amino-acid chain; its full sequence is Probable serine/threonine-protein kinase PBL20 (388 aa).

A lipid anchor (S-palmitoyl cysteine) is attached at Cys3. The region spanning 91 to 372 (FSRKLKIGEG…FVVESLTNII (282 aa)) is the Protein kinase domain. ATP contacts are provided by residues 97–105 (IGEGGFGSV) and Lys128. Asp221 functions as the Proton acceptor in the catalytic mechanism.

This sequence belongs to the protein kinase superfamily. Ser/Thr protein kinase family.

The protein resides in the cell membrane. The catalysed reaction is L-seryl-[protein] + ATP = O-phospho-L-seryl-[protein] + ADP + H(+). The enzyme catalyses L-threonyl-[protein] + ATP = O-phospho-L-threonyl-[protein] + ADP + H(+). Functionally, may be involved in plant defense signaling. The protein is Probable serine/threonine-protein kinase PBL20 of Arabidopsis thaliana (Mouse-ear cress).